The chain runs to 282 residues: ADP-ribosyl cyclase/cyclic ADP-ribose hydrolase (282 aa).

An N-terminal signal peptide occupies residues 1–24 (MSPVAIIACVCLAVTLTSISPSEA). 5 disulfide bridges follow: cysteine 39-cysteine 58, cysteine 75-cysteine 155, cysteine 136-cysteine 149, cysteine 230-cysteine 251, and cysteine 263-cysteine 272.

This sequence belongs to the ADP-ribosyl cyclase family. In terms of processing, has different isoforms which may be the result of different amounts of phosphorylation. In terms of tissue distribution, immature occoyctes. Oocytes.

Its subcellular location is the cytoplasmic vesicle. The catalysed reaction is NAD(+) = cyclic ADP-beta-D-ribose + nicotinamide + H(+). The enzyme catalyses nicotinate + NADP(+) = nicotinate-adenine dinucleotide phosphate + nicotinamide. It catalyses the reaction 2'-phospho-cyclic ADP-ribose + nicotinate = nicotinate-adenine dinucleotide phosphate. Its activity is regulated as follows. Activity is presumably regulated by its sequestration in vesicles before egg fertilization. After fertilization and upon NADase release, it could then be regulated via its potential phosphorylation sites. Its function is as follows. Synthesizes cyclic ADP-ribose (cADPR), a second messenger for calcium mobilization from endoplasmic reticulum; ADP-ribose is a minor product. Synthesizes the Ca(2+) mobilizer nicotinate-adenine dinucleotide phosphate from 2'-phospho-cADPR and nicotinic acid as well as from NADP(+) and nicotinic acid; with NADP(+) as substrate preferentially catalyzes NADP(+) hydrolysis rather than NAADP(+) synthesis, about 70-fold better at pH 7.4. Has cADPR hydrolase activity at very high enzyme concentrations, which is probably not physiological. The conversion of NAD(+) into ADP-ribose is also only observed at high enzyme concentrations and results from the hydrolysis of cADP-ribose. The protein is ADP-ribosyl cyclase/cyclic ADP-ribose hydrolase of Aplysia californica (California sea hare).